The chain runs to 496 residues: Solute carrier family 2, facilitated glucose transporter member 11 (496 aa).

At 1 to 11 the chain is on the cytoplasmic side; that stretch reads MRALRRLIQGR. Residues 12-32 form a helical membrane-spanning segment; it reads ILLLTICAAGIGGTFQFGYNL. Topologically, residues 33-61 are extracellular; it reads SIINAPTLHIQEFTNETWQARTGEPLPDH. N47 carries N-linked (GlcNAc...) asparagine glycosylation. Residues 62-82 traverse the membrane as a helical segment; sequence LVLLMWSLIVSLYPLGGLFGA. Residues 83–97 are Cytoplasmic-facing; the sequence is LLAGPLAITLGRKKS. A helical membrane pass occupies residues 98-118; that stretch reads LLVNNIFVVSAAILFGFSRKA. Residues 119-128 lie on the Extracellular side of the membrane; sequence GSFEMIMLGR. Residues 129-149 form a helical membrane-spanning segment; the sequence is LLVGVNAGVSMNIQPMYLGES. Residues 150–157 are Cytoplasmic-facing; sequence APKELRGA. The helical transmembrane segment at 158–178 threads the bilayer; it reads VAMSSAIFTALGIVMGQVVGL. Over 179–187 the chain is Extracellular; it reads RELLGGPQA. The chain crosses the membrane as a helical span at residues 188–208; sequence WPLLLASCLVPGALQLASLPL. The Cytoplasmic portion of the chain corresponds to 209 to 273; sequence LPESPRYLLI…LFQHRALRRQ (65 aa). The chain crosses the membrane as a helical span at residues 274–294; that stretch reads VTSLVVLGSAMELCGNDSVYA. Residues 295–311 lie on the Extracellular side of the membrane; that stretch reads YASSVFRKAGVPEAKIQ. The helical transmembrane segment at 312 to 332 threads the bilayer; it reads YAIIGTGSCELLTAVVSCVVI. The Cytoplasmic segment spans residues 333 to 338; that stretch reads ERVGRR. The helical transmembrane segment at 339 to 359 threads the bilayer; it reads VLLIGGYSLMTCWGSIFTVAL. Residues 360–364 lie on the Extracellular side of the membrane; it reads CLQSS. A helical membrane pass occupies residues 365–385; that stretch reads FPWTLYLAMACIFAFILSFGI. The Cytoplasmic segment spans residues 386–408; that stretch reads GPAGVTGILATELFDQMARPAAC. A helical membrane pass occupies residues 409–429; it reads MVCGALMWIMLILVGLGFPFI. Over 430–435 the chain is Extracellular; the sequence is MEALSH. The chain crosses the membrane as a helical span at residues 436–456; that stretch reads FLYVPFLGVCVCGAIYTGLFL. At 457-496 the chain is on the cytoplasmic side; the sequence is PETKGKTFQEISKELHRLNFPRRAQGPTWRSLEVIQSTEL.

The protein belongs to the major facilitator superfamily. Sugar transporter (TC 2.A.1.1) family. Glucose transporter subfamily. In terms of tissue distribution, expressed in heart and skeletal muscle.

It localises to the cell membrane. It carries out the reaction D-glucose(out) = D-glucose(in). In terms of biological role, facilitative glucose transporter. This Homo sapiens (Human) protein is Solute carrier family 2, facilitated glucose transporter member 11.